A 316-amino-acid polypeptide reads, in one-letter code: Tyrosine--tRNA ligase 2 (316 aa).

Residues tyrosine 26, tyrosine 146, glutamine 150, aspartate 153, and glutamine 168 each contribute to the L-tyrosine site. A 'KMSKS' region motif is present at residues lysine 219–serine 223. Lysine 222 lines the ATP pocket.

This sequence belongs to the class-I aminoacyl-tRNA synthetase family. TyrS type 4 subfamily. As to quaternary structure, homodimer.

The protein localises to the cytoplasm. The enzyme catalyses tRNA(Tyr) + L-tyrosine + ATP = L-tyrosyl-tRNA(Tyr) + AMP + diphosphate + H(+). Its function is as follows. Catalyzes the attachment of tyrosine to tRNA(Tyr) in a two-step reaction: tyrosine is first activated by ATP to form Tyr-AMP and then transferred to the acceptor end of tRNA(Tyr). The sequence is that of Tyrosine--tRNA ligase 2 from Pyrobaculum aerophilum (strain ATCC 51768 / DSM 7523 / JCM 9630 / CIP 104966 / NBRC 100827 / IM2).